Consider the following 444-residue polypeptide: Light-independent protochlorophyllide reductase subunit N (444 aa).

Residues Cys-36, Cys-61, and Cys-118 each contribute to the [4Fe-4S] cluster site.

Belongs to the BchN/ChlN family. As to quaternary structure, protochlorophyllide reductase is composed of three subunits; BchL, BchN and BchB. Forms a heterotetramer of two BchB and two BchN subunits. It depends on [4Fe-4S] cluster as a cofactor.

The catalysed reaction is chlorophyllide a + oxidized 2[4Fe-4S]-[ferredoxin] + 2 ADP + 2 phosphate = protochlorophyllide a + reduced 2[4Fe-4S]-[ferredoxin] + 2 ATP + 2 H2O. Its pathway is porphyrin-containing compound metabolism; bacteriochlorophyll biosynthesis (light-independent). Component of the dark-operative protochlorophyllide reductase (DPOR) that uses Mg-ATP and reduced ferredoxin to reduce ring D of protochlorophyllide (Pchlide) to form chlorophyllide a (Chlide). This reaction is light-independent. The NB-protein (BchN-BchB) is the catalytic component of the complex. The protein is Light-independent protochlorophyllide reductase subunit N of Chloroflexus aurantiacus (strain ATCC 29366 / DSM 635 / J-10-fl).